Consider the following 89-residue polypeptide: Small ribosomal subunit protein uS15c (89 aa).

Belongs to the universal ribosomal protein uS15 family. In terms of assembly, part of the 30S ribosomal subunit.

It localises to the plastid. This Aneura mirabilis (Parasitic liverwort) protein is Small ribosomal subunit protein uS15c (rps15).